Consider the following 474-residue polypeptide: Ribulose bisphosphate carboxylase large chain (474 aa).

Asn122 and Thr172 together coordinate substrate. Lys174 acts as the Proton acceptor in catalysis. Residue Lys176 coordinates substrate. The Mg(2+) site is built by Lys200, Asp202, and Glu203. Position 200 is an N6-carboxylysine (Lys200). His293 serves as the catalytic Proton acceptor. The substrate site is built by Arg294, His326, and Ser378.

Belongs to the RuBisCO large chain family. Type I subfamily. Heterohexadecamer of 8 large chains and 8 small chains; disulfide-linked. The disulfide link is formed within the large subunit homodimers. Mg(2+) serves as cofactor. Post-translationally, the disulfide bond which can form in the large chain dimeric partners within the hexadecamer appears to be associated with oxidative stress and protein turnover.

The protein localises to the carboxysome. It catalyses the reaction 2 (2R)-3-phosphoglycerate + 2 H(+) = D-ribulose 1,5-bisphosphate + CO2 + H2O. The enzyme catalyses D-ribulose 1,5-bisphosphate + O2 = 2-phosphoglycolate + (2R)-3-phosphoglycerate + 2 H(+). In terms of biological role, ruBisCO catalyzes two reactions: the carboxylation of D-ribulose 1,5-bisphosphate, the primary event in carbon dioxide fixation, as well as the oxidative fragmentation of the pentose substrate in the photorespiration process. Both reactions occur simultaneously and in competition at the same active site. This Gloeobacter violaceus (strain ATCC 29082 / PCC 7421) protein is Ribulose bisphosphate carboxylase large chain.